A 344-amino-acid polypeptide reads, in one-letter code: tRNA N6-adenosine threonylcarbamoyltransferase (344 aa).

The Fe cation site is built by His-112 and His-116. Substrate is bound by residues 134–138 (LASGG), Asp-167, Gly-180, and Asn-280. Asp-308 serves as a coordination point for Fe cation.

Belongs to the KAE1 / TsaD family. Fe(2+) serves as cofactor.

It localises to the cytoplasm. It catalyses the reaction L-threonylcarbamoyladenylate + adenosine(37) in tRNA = N(6)-L-threonylcarbamoyladenosine(37) in tRNA + AMP + H(+). In terms of biological role, required for the formation of a threonylcarbamoyl group on adenosine at position 37 (t(6)A37) in tRNAs that read codons beginning with adenine. Is involved in the transfer of the threonylcarbamoyl moiety of threonylcarbamoyl-AMP (TC-AMP) to the N6 group of A37, together with TsaE and TsaB. TsaD likely plays a direct catalytic role in this reaction. This Rickettsia rickettsii (strain Iowa) protein is tRNA N6-adenosine threonylcarbamoyltransferase.